The sequence spans 447 residues: Ribosomal protein uS12 methylthiotransferase RimO (447 aa).

Positions 10–120 (PKVGFVSLGC…VVNAVHDVVP (111 aa)) constitute an MTTase N-terminal domain. Cys19, Cys55, Cys84, Cys153, Cys157, and Cys160 together coordinate [4Fe-4S] cluster. Positions 139–377 (LTPRHYAYLK…MAHQQAISAA (239 aa)) constitute a Radical SAM core domain. The TRAM domain maps to 380-447 (QMKIGKEIEV…DEYDLWAEML (68 aa)).

This sequence belongs to the methylthiotransferase family. RimO subfamily. [4Fe-4S] cluster serves as cofactor.

The protein localises to the cytoplasm. It carries out the reaction L-aspartate(89)-[ribosomal protein uS12]-hydrogen + (sulfur carrier)-SH + AH2 + 2 S-adenosyl-L-methionine = 3-methylsulfanyl-L-aspartate(89)-[ribosomal protein uS12]-hydrogen + (sulfur carrier)-H + 5'-deoxyadenosine + L-methionine + A + S-adenosyl-L-homocysteine + 2 H(+). Functionally, catalyzes the methylthiolation of an aspartic acid residue of ribosomal protein uS12. The polypeptide is Ribosomal protein uS12 methylthiotransferase RimO (Pseudomonas syringae pv. syringae (strain B728a)).